A 227-amino-acid polypeptide reads, in one-letter code: Guanylate kinase (227 aa).

Positions 21–199 (GNLFMVVAPS…ALAELECIVA (179 aa)) constitute a Guanylate kinase-like domain. 28–35 (APSGAGKS) is an ATP binding site.

The protein belongs to the guanylate kinase family.

It localises to the cytoplasm. The catalysed reaction is GMP + ATP = GDP + ADP. Functionally, essential for recycling GMP and indirectly, cGMP. The chain is Guanylate kinase from Burkholderia thailandensis (strain ATCC 700388 / DSM 13276 / CCUG 48851 / CIP 106301 / E264).